A 351-amino-acid chain; its full sequence is UDP-N-acetylglucosamine--N-acetylmuramyl-(pentapeptide) pyrophosphoryl-undecaprenol N-acetylglucosamine transferase (351 aa).

UDP-N-acetyl-alpha-D-glucosamine-binding positions include 13-15 (TGG), Asn-125, Arg-161, Ser-189, Ile-241, 260-265 (ALTVCE), and Gln-285.

This sequence belongs to the glycosyltransferase 28 family. MurG subfamily.

The protein resides in the cell inner membrane. The catalysed reaction is di-trans,octa-cis-undecaprenyl diphospho-N-acetyl-alpha-D-muramoyl-L-alanyl-D-glutamyl-meso-2,6-diaminopimeloyl-D-alanyl-D-alanine + UDP-N-acetyl-alpha-D-glucosamine = di-trans,octa-cis-undecaprenyl diphospho-[N-acetyl-alpha-D-glucosaminyl-(1-&gt;4)]-N-acetyl-alpha-D-muramoyl-L-alanyl-D-glutamyl-meso-2,6-diaminopimeloyl-D-alanyl-D-alanine + UDP + H(+). The protein operates within cell wall biogenesis; peptidoglycan biosynthesis. Functionally, cell wall formation. Catalyzes the transfer of a GlcNAc subunit on undecaprenyl-pyrophosphoryl-MurNAc-pentapeptide (lipid intermediate I) to form undecaprenyl-pyrophosphoryl-MurNAc-(pentapeptide)GlcNAc (lipid intermediate II). The protein is UDP-N-acetylglucosamine--N-acetylmuramyl-(pentapeptide) pyrophosphoryl-undecaprenol N-acetylglucosamine transferase of Haemophilus influenzae (strain ATCC 51907 / DSM 11121 / KW20 / Rd).